The primary structure comprises 183 residues: Integrase-like protein y4lS (183 aa).

Residues 2–136 form the Resolvase/invertase-type recombinase catalytic domain; the sequence is ARIGYARTFT…EGIAAARKRG (135 aa).

The protein belongs to the site-specific recombinase resolvase family.

This is Integrase-like protein y4lS from Sinorhizobium fredii (strain NBRC 101917 / NGR234).